The primary structure comprises 255 residues: 4-hydroxy-tetrahydrodipicolinate reductase (255 aa).

Residues 9–14 (GFKGKM), 89–91 (GTT), and 115–118 (APNF) contribute to the NAD(+) site. His-145 acts as the Proton donor/acceptor in catalysis. His-146 provides a ligand contact to (S)-2,3,4,5-tetrahydrodipicolinate. The active-site Proton donor is Lys-149. 155 to 156 (GT) serves as a coordination point for (S)-2,3,4,5-tetrahydrodipicolinate.

It belongs to the DapB family.

It localises to the cytoplasm. The catalysed reaction is (S)-2,3,4,5-tetrahydrodipicolinate + NAD(+) + H2O = (2S,4S)-4-hydroxy-2,3,4,5-tetrahydrodipicolinate + NADH + H(+). It catalyses the reaction (S)-2,3,4,5-tetrahydrodipicolinate + NADP(+) + H2O = (2S,4S)-4-hydroxy-2,3,4,5-tetrahydrodipicolinate + NADPH + H(+). The protein operates within amino-acid biosynthesis; L-lysine biosynthesis via DAP pathway; (S)-tetrahydrodipicolinate from L-aspartate: step 4/4. In terms of biological role, catalyzes the conversion of 4-hydroxy-tetrahydrodipicolinate (HTPA) to tetrahydrodipicolinate. This chain is 4-hydroxy-tetrahydrodipicolinate reductase, found in Streptococcus sanguinis (strain SK36).